Consider the following 162-residue polypeptide: Regulator of ribonuclease activity A (162 aa).

It belongs to the RraA family. Homotrimer. Binds to both RNA-binding sites in the C-terminal region of Rne and to RhlB.

Its subcellular location is the cytoplasm. Globally modulates RNA abundance by binding to RNase E (Rne) and regulating its endonucleolytic activity. Can modulate Rne action in a substrate-dependent manner by altering the composition of the degradosome. Modulates RNA-binding and helicase activities of the degradosome. This chain is Regulator of ribonuclease activity A, found in Haemophilus influenzae (strain 86-028NP).